The chain runs to 498 residues: Probable malate:quinone oxidoreductase 2 (498 aa).

The protein belongs to the MQO family. Requires FAD as cofactor.

The catalysed reaction is (S)-malate + a quinone = a quinol + oxaloacetate. It functions in the pathway carbohydrate metabolism; tricarboxylic acid cycle; oxaloacetate from (S)-malate (quinone route): step 1/1. The protein is Probable malate:quinone oxidoreductase 2 of Staphylococcus epidermidis (strain ATCC 12228 / FDA PCI 1200).